Consider the following 1404-residue polypeptide: Probable GPI-anchored adhesin-like protein PGA55 (1404 aa).

The signal sequence occupies residues 1–19 (MVLLCKYKVSWVFVLSVAG). 87 repeat units span residues 104 to 109 (VSSSSS), 136 to 141 (VSSSSE), 156 to 161 (VSSSSK), 162 to 167 (VSSSSE), 183 to 188 (VSSSSQ), 196 to 201 (VSSSSE), 203 to 208 (VSSSSE), 209 to 214 (VSSSSE), 216 to 221 (VSSSSE), 222 to 227 (VSSSSE), 228 to 233 (VSSSSE), 234 to 239 (VSSSSQ), 247 to 252 (VSSSSE), 253 to 258 (VSSSSS), 261 to 266 (VSSSSE), 267 to 272 (VSSSSE), 274 to 279 (VSSSSE), 280 to 285 (VSSSSE), 286 to 291 (VSSSSE), 292 to 297 (VSSSSE), 298 to 303 (VSSSSE), 304 to 309 (VSSSSQ), 317 to 322 (VSSSSE), 324 to 329 (VSSSSE), 330 to 335 (VSSSSE), 336 to 341 (VSSSSE), 343 to 348 (VSSSSE), 349 to 354 (VSSSSE), 355 to 360 (VSSSSE), 361 to 366 (VSSSSQ), 374 to 379 (VSSSSE), 380 to 385 (VSSSSS), 388 to 393 (VSSSSE), 394 to 399 (VSSSSE), 401 to 406 (VSSSSE), 407 to 412 (VSSSSE), 413 to 418 (VSSSSE), 419 to 424 (VSSSSE), 425 to 430 (VSSSSE), 431 to 436 (VSSSSQ), 444 to 449 (VSSSSE), 450 to 455 (VSSSSE), 457 to 462 (VSSSSE), 463 to 468 (VSSSSE), 469 to 474 (VSSSSE), 475 to 480 (VSSSSQ), 488 to 493 (VSSSSE), 494 to 500 (VSSSSSE), 502 to 507 (VSSSSE), 508 to 513 (VSSSSE), 515 to 520 (VSSSSE), 521 to 526 (VSSSSE), 527 to 532 (VSSSSE), 533 to 538 (VSSSSQ), 546 to 551 (VSSSSE), 552 to 557 (VSSSSS), 560 to 565 (VSSSSE), 566 to 571 (VSSSSE), 573 to 578 (VSSSSE), 579 to 584 (VSSSSE), 585 to 590 (VSSSSE), 591 to 596 (VSSSSQ), 604 to 609 (VSSSSE), 611 to 616 (VSSSSE), 617 to 622 (VSSSSE), 623 to 628 (VSSSSE), 629 to 634 (VSSSSE), 635 to 640 (VSSSSE), 641 to 646 (VSSSSQ), 654 to 659 (VSSSSE), 660 to 665 (VSSSSS), 668 to 673 (VSSSSE), 674 to 679 (VSSSSE), 681 to 686 (VSSSSE), 687 to 692 (VSSSSE), 693 to 698 (VSSSSE), 699 to 704 (VSSSSQ), 712 to 717 (VSSSSE), 719 to 724 (VSSSSE), 725 to 730 (VSSSSE), 731 to 736 (VSSSSE), 737 to 742 (VSSSSE), 743 to 748 (VSSSSE), 749 to 754 (VSSSSE), 771 to 776 (VTSSSE), 777 to 782 (VSSSSQ), and 797 to 802 (VSSSSE). The interval 104 to 541 (VSSSSSEVIS…EVSSSSQVTS (438 aa)) is 88 X 6 AA approximate tandem repeats. The interval 113–833 (SSSSEEASSS…VSSSSASSEV (721 aa)) is disordered. N817 carries N-linked (GlcNAc...) asparagine glycosylation. A 1-88 repeat occupies 824 to 829 (VSSSSA). Residues N994 and N1074 are each glycosylated (N-linked (GlcNAc...) asparagine). Residue N1382 is the site of GPI-anchor amidated asparagine attachment. A propeptide spans 1383 to 1404 (AASRQSFNYKFIVGLILAYIIA) (removed in mature form).

Its subcellular location is the cell membrane. In terms of biological role, predicted GPI-anchored adhesin-like protein which may be involved in filamentous growth and chlamydospore formation. This Candida albicans (strain SC5314 / ATCC MYA-2876) (Yeast) protein is Probable GPI-anchored adhesin-like protein PGA55 (PGA55).